The following is a 343-amino-acid chain: 4-hydroxy-2-oxovalerate aldolase 1 (343 aa).

The Pyruvate carboxyltransferase domain occupies 8–260; sequence VTVHDMTLRD…ETGVDVAKIT (253 aa). 16–17 is a binding site for substrate; it reads RD. D17 contacts Mn(2+). H20 (proton acceptor) is an active-site residue. Substrate is bound by residues S170 and H199. The Mn(2+) site is built by H199 and H201. Y290 contacts substrate.

This sequence belongs to the 4-hydroxy-2-oxovalerate aldolase family.

It carries out the reaction (S)-4-hydroxy-2-oxopentanoate = acetaldehyde + pyruvate. The polypeptide is 4-hydroxy-2-oxovalerate aldolase 1 (Dechloromonas aromatica (strain RCB)).